We begin with the raw amino-acid sequence, 101 residues long: Small ribosomal subunit protein eS24 (101 aa).

It belongs to the eukaryotic ribosomal protein eS24 family.

This chain is Small ribosomal subunit protein eS24, found in Methanosarcina acetivorans (strain ATCC 35395 / DSM 2834 / JCM 12185 / C2A).